A 347-amino-acid polypeptide reads, in one-letter code: Phosphate acyltransferase (347 aa).

The protein belongs to the PlsX family. In terms of assembly, homodimer. Probably interacts with PlsY.

The protein localises to the cytoplasm. It carries out the reaction a fatty acyl-[ACP] + phosphate = an acyl phosphate + holo-[ACP]. The protein operates within lipid metabolism; phospholipid metabolism. Its function is as follows. Catalyzes the reversible formation of acyl-phosphate (acyl-PO(4)) from acyl-[acyl-carrier-protein] (acyl-ACP). This enzyme utilizes acyl-ACP as fatty acyl donor, but not acyl-CoA. This Anaplasma marginale (strain St. Maries) protein is Phosphate acyltransferase.